The chain runs to 218 residues: Small ribosomal subunit protein uS3c (218 aa).

Positions 47-118 (VQKNMRTSSG…KLNIAVTRIA (72 aa)) constitute a KH type-2 domain.

Belongs to the universal ribosomal protein uS3 family. Part of the 30S ribosomal subunit.

It localises to the plastid. The protein resides in the chloroplast. The protein is Small ribosomal subunit protein uS3c (rps3) of Solanum lycopersicum (Tomato).